The chain runs to 1052 residues: Error-prone DNA polymerase (1052 aa).

The protein belongs to the DNA polymerase type-C family. DnaE2 subfamily.

The protein resides in the cytoplasm. The enzyme catalyses DNA(n) + a 2'-deoxyribonucleoside 5'-triphosphate = DNA(n+1) + diphosphate. In terms of biological role, DNA polymerase involved in damage-induced mutagenesis and translesion synthesis (TLS). It is not the major replicative DNA polymerase. This chain is Error-prone DNA polymerase, found in Bordetella bronchiseptica (strain ATCC BAA-588 / NCTC 13252 / RB50) (Alcaligenes bronchisepticus).